Reading from the N-terminus, the 599-residue chain is Laccase-15 (599 aa).

The signal sequence occupies residues Met1–Gly29. Plastocyanin-like domains follow at residues Val46 to Gly162 and Arg173 to Asn328. Asn51 and Asn92 each carry an N-linked (GlcNAc...) asparagine glycan. Residues His96 and His98 each contribute to the Cu cation site. Residue Asn124 is glycosylated (N-linked (GlcNAc...) asparagine). Cu cation-binding residues include His141 and His143. 6 N-linked (GlcNAc...) asparagine glycosylation sites follow: Asn193, Asn217, Asn331, Asn355, Asn412, and Asn454. The region spanning Glu444–Pro586 is the Plastocyanin-like 3 domain. The Cu cation site is built by Asn503, His506, His508, His565, Cys566, His567, His571, and Met576.

The protein belongs to the multicopper oxidase family. Cu cation is required as a cofactor.

The protein localises to the secreted. Its subcellular location is the extracellular space. It localises to the apoplast. The catalysed reaction is 4 hydroquinone + O2 = 4 benzosemiquinone + 2 H2O. Lignin degradation and detoxification of lignin-derived products. The polypeptide is Laccase-15 (LAC15) (Oryza sativa subsp. japonica (Rice)).